Reading from the N-terminus, the 624-residue chain is Glyco-Gag protein (624 aa).

Topologically, residues 1–63 (LGDVPGTSGA…FLPSVWNRSR (63 aa)) are cytoplasmic. Residues 64–86 (AARLVCCSIVLCCLCLAVFLYWS) form a helical membrane-spanning segment. At 87 to 624 (ENMGQTVTTP…PQTSLLALDD (538 aa)) the chain is on the extracellular side. N-linked (GlcNAc...) asparagine; by host glycosylation is present at N113. Pro residues-rich tracts occupy residues 200-209 (PSLLPEPPLS) and 247-258 (DPPPYRDPGPPP). Disordered stretches follow at residues 200–284 (PSLL…ASRL) and 290–309 (LPVADSTTSQAFPLRSGGNG). The N-linked (GlcNAc...) asparagine; by host glycan is linked to N478. Basic and acidic residues-rich tracts occupy residues 520–552 (RETPEEREERIKRETEEKEERRRAEDEQKEKER) and 572–605 (KQDRQGGERRRPQLDKDQCAYCKEKGHWAKDCPK). The interval 520–624 (RETPEEREER…PQTSLLALDD (105 aa)) is disordered.

Glycosylated by host. In terms of processing, cleaved by host near the middle of the molecule, releasing the c-terminal half containing capsid and nucleoprotein domains op GAG.

It is found in the host cell membrane. In terms of biological role, plays a role in viral particle release. Presumably acts by facilitating the fission of the virion bud at the cell surface. May prevent the antiviral activity of murine APOBEC3. The polypeptide is Glyco-Gag protein (Mus musculus (Mouse)).